The chain runs to 750 residues: Protein psiO (750 aa).

A signal peptide spans 1–22 (MKEKIKLSLLILTSIILAVANS). The Extracellular portion of the chain corresponds to 23–688 (QTQPKTLAMT…GCNTAAVVST (666 aa)). N129 is a glycosylation site (N-linked (GlcNAc...) asparagine). The PA14 domain maps to 140–286 (QEYFPINGKG…DDYCGVCNGD (147 aa)). N-linked (GlcNAc...) asparagine glycans are attached at residues N447, N506, N554, N571, and N659. The helical transmembrane segment at 689-709 (AVIAGVTVAAVVGLGIFLYGG) threads the bilayer. Over 710–750 (KKGYDYYQDNKSKGMTGANSNPLYKESGNAGQNPLYNDNNL) the chain is Cytoplasmic. The tract at residues 727–750 (ANSNPLYKESGNAGQNPLYNDNNL) is disordered. Positions 738–750 (NAGQNPLYNDNNL) are enriched in polar residues.

The protein belongs to the prespore-cell-inducing factor family.

The protein localises to the membrane. The protein is Protein psiO (psiO) of Dictyostelium discoideum (Social amoeba).